The sequence spans 205 residues: Probable GTP-binding protein EngB (205 aa).

Positions 27 to 201 (EGMEIAFAGR…AAKLDSWFSS (175 aa)) constitute an EngB-type G domain. Residues 35-42 (GRSNAGKS), 62-66 (GRTQL), 80-83 (DLPG), 147-150 (TKAD), and 180-182 (FSA) each bind GTP. Mg(2+) contacts are provided by Ser42 and Thr64.

Belongs to the TRAFAC class TrmE-Era-EngA-EngB-Septin-like GTPase superfamily. EngB GTPase family. The cofactor is Mg(2+).

Necessary for normal cell division and for the maintenance of normal septation. The chain is Probable GTP-binding protein EngB from Mannheimia succiniciproducens (strain KCTC 0769BP / MBEL55E).